The following is a 197-amino-acid chain: Imidazoleglycerol-phosphate dehydratase (197 aa).

It belongs to the imidazoleglycerol-phosphate dehydratase family.

It localises to the cytoplasm. It carries out the reaction D-erythro-1-(imidazol-4-yl)glycerol 3-phosphate = 3-(imidazol-4-yl)-2-oxopropyl phosphate + H2O. It functions in the pathway amino-acid biosynthesis; L-histidine biosynthesis; L-histidine from 5-phospho-alpha-D-ribose 1-diphosphate: step 6/9. This is Imidazoleglycerol-phosphate dehydratase from Methylococcus capsulatus (strain ATCC 33009 / NCIMB 11132 / Bath).